A 263-amino-acid polypeptide reads, in one-letter code: Undecaprenyl-diphosphatase 3 (263 aa).

Transmembrane regions (helical) follow at residues 15 to 37 (GLTEFLPVSSTGHMILTGHLIGF), 42 to 62 (AKVFEVVIQLGSILAVVVIFW), 83 to 103 (LHIIIGMIPAGVLGVLFHSAI), 106 to 126 (VLFGPGPVVISLVAGGILMIV), 142 to 162 (ITYKQAFTIGMFQCLALWPGF), 183 to 203 (AEYTFILAVPMMVAASGLDLI), 216 to 236 (LFATGFITAFVVAMLAIVSFL), and 242 to 262 (VKLTPFAYYRFILAAVFYFFI).

This sequence belongs to the UppP family.

The protein localises to the cell membrane. The enzyme catalyses di-trans,octa-cis-undecaprenyl diphosphate + H2O = di-trans,octa-cis-undecaprenyl phosphate + phosphate + H(+). Its function is as follows. Catalyzes the dephosphorylation of undecaprenyl diphosphate (UPP). Confers resistance to bacitracin. The sequence is that of Undecaprenyl-diphosphatase 3 from Bacillus thuringiensis subsp. konkukian (strain 97-27).